Here is a 149-residue protein sequence, read N- to C-terminus: Large ribosomal subunit protein bL20m (149 aa).

The transit peptide at 1–9 directs the protein to the mitochondrion; the sequence is MVFLTAQLW.

The protein belongs to the bacterial ribosomal protein bL20 family. As to quaternary structure, component of the mitochondrial large ribosomal subunit (mt-LSU). Mature mammalian 55S mitochondrial ribosomes consist of a small (28S) and a large (39S) subunit. The 28S small subunit contains a 12S ribosomal RNA (12S mt-rRNA) and 30 different proteins. The 39S large subunit contains a 16S rRNA (16S mt-rRNA), a copy of mitochondrial valine transfer RNA (mt-tRNA(Val)), which plays an integral structural role, and 52 different proteins. Interacts with OXA1L.

The protein localises to the mitochondrion. This Homo sapiens (Human) protein is Large ribosomal subunit protein bL20m (MRPL20).